The following is a 283-amino-acid chain: MAEITASLVKELRDRTGAGMMECKKALVEANGDIELAIDNMRKSGQAKAAKKAGRVAAEGVILARVENGFGVLVEMNCETDFVAKDAGFLGLANEVADFAAANKGTTIEALQAQFEEKRAALVAKIGENMNIRRVAYLDGQVIAQYLHGAKIGVLVAGEGSADELKKVAMHVAASKPEFVNPEDVSAEVVEHERQIQIDIAINSGKPKEIAEKMVEGRMKKFTGEVSLTGQAFVMDPSVSVGDFLKSVNTSVSNFIRLEVGEGIEKKEEDFAAEVAKITGGNA.

Positions 80–83 (TDFV) are involved in Mg(2+) ion dislocation from EF-Tu.

This sequence belongs to the EF-Ts family.

It is found in the cytoplasm. Its function is as follows. Associates with the EF-Tu.GDP complex and induces the exchange of GDP to GTP. It remains bound to the aminoacyl-tRNA.EF-Tu.GTP complex up to the GTP hydrolysis stage on the ribosome. The protein is Elongation factor Ts of Haemophilus influenzae (strain 86-028NP).